Reading from the N-terminus, the 218-residue chain is Elongation factor Ts (218 aa).

Positions 82–85 (TDFV) are involved in Mg(2+) ion dislocation from EF-Tu.

It belongs to the EF-Ts family.

The protein resides in the cytoplasm. In terms of biological role, associates with the EF-Tu.GDP complex and induces the exchange of GDP to GTP. It remains bound to the aminoacyl-tRNA.EF-Tu.GTP complex up to the GTP hydrolysis stage on the ribosome. The polypeptide is Elongation factor Ts (Prochlorococcus marinus (strain NATL1A)).